Consider the following 185-residue polypeptide: MVDQAYEPRLKSEYRARIRAAMKEQFAYTNEMQIPKLDKIVLNMGIGEAVADSKKAQTALKDLMAIAGQKPVATKARKSIAGFKLREGMVVGAKVTLRKDKMYEFLDRLVTIALPRVKDFRGLNGKSFDGRGNYAMGLKEHLVFPEINYDQIEQIWGMDIIVCTTAKTDQEAKALLKEFQFPFTN.

It belongs to the universal ribosomal protein uL5 family. As to quaternary structure, part of the 50S ribosomal subunit; part of the 5S rRNA/L5/L18/L25 subcomplex. Contacts the 5S rRNA and the P site tRNA. Forms a bridge to the 30S subunit in the 70S ribosome.

In terms of biological role, this is one of the proteins that bind and probably mediate the attachment of the 5S RNA into the large ribosomal subunit, where it forms part of the central protuberance. In the 70S ribosome it contacts protein S13 of the 30S subunit (bridge B1b), connecting the 2 subunits; this bridge is implicated in subunit movement. Contacts the P site tRNA; the 5S rRNA and some of its associated proteins might help stabilize positioning of ribosome-bound tRNAs. This is Large ribosomal subunit protein uL5 from Caulobacter sp. (strain K31).